The primary structure comprises 502 residues: ATP synthase subunit beta (502 aa).

156–163 (GGAGVGKT) contributes to the ATP binding site.

Belongs to the ATPase alpha/beta chains family. As to quaternary structure, F-type ATPases have 2 components, CF(1) - the catalytic core - and CF(0) - the membrane proton channel. CF(1) has five subunits: alpha(3), beta(3), gamma(1), delta(1), epsilon(1). CF(0) has three main subunits: a(1), b(2) and c(9-12). The alpha and beta chains form an alternating ring which encloses part of the gamma chain. CF(1) is attached to CF(0) by a central stalk formed by the gamma and epsilon chains, while a peripheral stalk is formed by the delta and b chains.

The protein localises to the cell membrane. The catalysed reaction is ATP + H2O + 4 H(+)(in) = ADP + phosphate + 5 H(+)(out). Its function is as follows. Produces ATP from ADP in the presence of a proton gradient across the membrane. The catalytic sites are hosted primarily by the beta subunits. The polypeptide is ATP synthase subunit beta (Cellulophaga lytica (Cytophaga lytica)).